The chain runs to 478 residues: 3-isopropylmalate dehydratase large subunit (478 aa).

Residues C347, C407, and C410 each contribute to the [4Fe-4S] cluster site.

Belongs to the aconitase/IPM isomerase family. LeuC type 1 subfamily. In terms of assembly, heterodimer of LeuC and LeuD. [4Fe-4S] cluster is required as a cofactor.

It catalyses the reaction (2R,3S)-3-isopropylmalate = (2S)-2-isopropylmalate. It participates in amino-acid biosynthesis; L-leucine biosynthesis; L-leucine from 3-methyl-2-oxobutanoate: step 2/4. Functionally, catalyzes the isomerization between 2-isopropylmalate and 3-isopropylmalate, via the formation of 2-isopropylmaleate. This chain is 3-isopropylmalate dehydratase large subunit, found in Prochlorococcus marinus (strain MIT 9303).